Reading from the N-terminus, the 555-residue chain is Protein peste (555 aa).

Over 1-7 the chain is Cytoplasmic; sequence MTSRTRH. Residues 8–28 form a helical membrane-spanning segment; that stretch reads CARLGIVLLGICCIASGIYLF. Residues 29-434 lie on the Extracellular side of the membrane; sequence RNWIDMFTRM…VRVSEEIAAD (406 aa). 7 N-linked (GlcNAc...) asparagine glycosylation sites follow: Asn70, Asn110, Asn129, Asn213, Asn242, Asn312, and Asn342. The helical transmembrane segment at 435-455 threads the bilayer; that stretch reads IALVPLIVLLGQIVTGILLAG. Over 456–555 the chain is Cytoplasmic; it reads GLICTCWYPT…SEDSPDVVVR (100 aa).

The protein belongs to the CD36 family.

It is found in the cell membrane. In terms of biological role, (Microbial infection) Plays a role in mycobacterial infection. Mediates infection by M.fortuitum and uptake of M.smegmatis. The chain is Protein peste from Drosophila melanogaster (Fruit fly).